We begin with the raw amino-acid sequence, 176 residues long: Ribosome maturation factor RimM (176 aa).

One can recognise a PRC barrel domain in the interval 97-176 (EDEFYWRDLI…QILVDWDPDF (80 aa)).

The protein belongs to the RimM family. In terms of assembly, binds ribosomal protein uS19.

Its subcellular location is the cytoplasm. An accessory protein needed during the final step in the assembly of 30S ribosomal subunit, possibly for assembly of the head region. Essential for efficient processing of 16S rRNA. May be needed both before and after RbfA during the maturation of 16S rRNA. It has affinity for free ribosomal 30S subunits but not for 70S ribosomes. The chain is Ribosome maturation factor RimM from Shewanella oneidensis (strain ATCC 700550 / JCM 31522 / CIP 106686 / LMG 19005 / NCIMB 14063 / MR-1).